A 949-amino-acid polypeptide reads, in one-letter code: Translation initiation factor IF-2 (949 aa).

3 disordered regions span residues 54-183, 217-288, and 305-357; these read FLKP…EAAP, LPAA…EVAL, and EVVA…EMQA. 2 stretches are compositionally biased toward basic and acidic residues: residues 67 to 92 and 101 to 164; these read DQEK…ERHI and IEAK…EEAA. 2 stretches are compositionally biased toward low complexity: residues 165–183 and 217–228; these read RAAA…EAAP and LPAAAPAAPSAP. Composition is skewed to basic and acidic residues over residues 235–288 and 330–339; these read PVEE…EVAL and KYQDNEDRLQ. A tr-type G domain is found at 445–619; that stretch reads TRPPVITVMG…EMLNLQSNPT (175 aa). A G1 region spans residues 454–461; sequence GHVDHGKT. Residue 454–461 coordinates GTP; it reads GHVDHGKT. The segment at 479-483 is G2; it reads GITQH. Residues 501–504 form a G3 region; the sequence is DTPG. GTP contacts are provided by residues 501 to 505 and 555 to 558; these read DTPGH and NKID. A G4 region spans residues 555 to 558; the sequence is NKID. The tract at residues 591–593 is G5; that stretch reads SAK.

This sequence belongs to the TRAFAC class translation factor GTPase superfamily. Classic translation factor GTPase family. IF-2 subfamily.

The protein resides in the cytoplasm. In terms of biological role, one of the essential components for the initiation of protein synthesis. Protects formylmethionyl-tRNA from spontaneous hydrolysis and promotes its binding to the 30S ribosomal subunits. Also involved in the hydrolysis of GTP during the formation of the 70S ribosomal complex. The chain is Translation initiation factor IF-2 from Magnetococcus marinus (strain ATCC BAA-1437 / JCM 17883 / MC-1).